Reading from the N-terminus, the 423-residue chain is MAKTIQAIRGMNDCAPTESPLWQWIEAQVRNVLNSYGYSEVRMPIVESTPLFARAIGEVTDVVSKEMYTFWDNDEQLTLRPEGTAGCVRAAIEHGWIYNNEQRLWYIGPMFRHERPQKGRYRQFHQVGVEVFGIANPEIDAELIMLTYRLWKALGIDQHVTLQLNSIGSLEARANYRSALVGFLENHQDLMSDEEKERLVRNPLRILDTKNPELQKVLDNAPKLLDYLDDESRTHFEQLCSLLDAVGIQYEINPKLVRGLDYYNKTVFEWVTSALGAQGTVCGGGRYDGLVEQLGGHATPSIGFAMGLERLVLLVQEVNPNVPAKSAVDIYVVYQGEGATLAAFELAEKVRSELPHLNTMLHCSSGNFKKQFKRADKSGATLALVIGESEVQNKQVVVKHLQGGTDQQTLDLVNIIDYLQTQF.

It belongs to the class-II aminoacyl-tRNA synthetase family. Homodimer.

The protein resides in the cytoplasm. It carries out the reaction tRNA(His) + L-histidine + ATP = L-histidyl-tRNA(His) + AMP + diphosphate + H(+). This chain is Histidine--tRNA ligase (hisS), found in Haemophilus influenzae (strain ATCC 51907 / DSM 11121 / KW20 / Rd).